Reading from the N-terminus, the 175-residue chain is MVSVLVVGYKAFDLGIFGDKDQRLKIIKAAIRRDLIYLLENGMKWLVFTGNLGFEVWVLEVAKELQEEYNFQLATIFIFENQGENWNEANQEKLANFKNVDFIKYAYPSYENPSQFRTYNQFLLESTDGAYLFYDEENETKLKYLYRMMKENKQYHIKKLTFDDLNEMAENFSEI.

It belongs to the UPF0398 family.

This chain is UPF0398 protein SGO_0588, found in Streptococcus gordonii (strain Challis / ATCC 35105 / BCRC 15272 / CH1 / DL1 / V288).